Reading from the N-terminus, the 340-residue chain is Short-chain dehydrogenase/reductase prx1 (340 aa).

Ile60, Lys84, Asp104, Asn131, and Lys162 together coordinate NADP(+). The active-site Proton donor is the Ser184. NADP(+) contacts are provided by Tyr210 and Lys214. Residue Tyr210 is the Proton acceptor of the active site. The Lowers pKa of active site Tyr role is filled by Lys214.

Belongs to the short-chain dehydrogenases/reductases (SDR) family.

It functions in the pathway sesquiterpene biosynthesis. Short-chain dehydrogenase/reductase; part of the gene cluster that mediates the biosynthesis of PR-toxin, a bicyclic sesquiterpene belonging to the eremophilane class and acting as a mycotoxin. The first step of the pathway is catalyzed by the aristolochene synthase which performs the cyclization of trans,trans-farnesyl diphosphate (FPP) to the bicyclic sesquiterpene aristolochene. Following the formation of aristolochene, the non-oxygenated aristolochene is converted to the trioxygenated intermediate eremofortin B, via 7-epi-neopetasone. This conversion appears to involve three enzymes, a hydroxysterol oxidase-like enzyme, the quinone-oxidase prx3 that forms the quinone-type-structure in the bicyclic nucleus of aristolochene with the C8-oxo group and the C-3 hydroxyl group, and the P450 monooxygenase ORF6 that introduces the epoxide at the double bond between carbons 1 and 2. No monoxy or dioxy-intermediates have been reported to be released to the broth, so these three early oxidative reactions may be coupled together. Eremofortin B is further oxidized by another P450 monooxygenase, that introduces a second epoxide between carbons 7 and 11 prior to acetylation to eremofortin A by the acetyltransferase ORF8. The second epoxidation may be performed by a second P450 monooxygenase. After the acetylation step, eremofortin A is converted to eremofortin C and then to PR-toxin. First the conversion of eremofortin A to eremofortin C proceeds by oxidation of the side chain of the molecule at C-12 and is catalyzed by the short-chain oxidoreductase prx1. The cytochrome P450 monooxygenase ORF6 is probably also involved in this step. The primary alcohol formed at C-12 is finally oxidized by the short-chain alcohol dehydrogenase prx4 that forms PR-toxin. This Penicillium roqueforti (strain FM164) protein is Short-chain dehydrogenase/reductase prx1.